Consider the following 262-residue polypeptide: Phosphatidylserine decarboxylase proenzyme (262 aa).

Catalysis depends on charge relay system; for autoendoproteolytic cleavage activity residues D86, H142, and S226. Residue S226 is the Schiff-base intermediate with substrate; via pyruvic acid; for decarboxylase activity of the active site. S226 carries the pyruvic acid (Ser); by autocatalysis modification.

This sequence belongs to the phosphatidylserine decarboxylase family. PSD-B subfamily. Prokaryotic type I sub-subfamily. As to quaternary structure, heterodimer of a large membrane-associated beta subunit and a small pyruvoyl-containing alpha subunit. Requires pyruvate as cofactor. In terms of processing, is synthesized initially as an inactive proenzyme. Formation of the active enzyme involves a self-maturation process in which the active site pyruvoyl group is generated from an internal serine residue via an autocatalytic post-translational modification. Two non-identical subunits are generated from the proenzyme in this reaction, and the pyruvate is formed at the N-terminus of the alpha chain, which is derived from the carboxyl end of the proenzyme. The autoendoproteolytic cleavage occurs by a canonical serine protease mechanism, in which the side chain hydroxyl group of the serine supplies its oxygen atom to form the C-terminus of the beta chain, while the remainder of the serine residue undergoes an oxidative deamination to produce ammonia and the pyruvoyl prosthetic group on the alpha chain. During this reaction, the Ser that is part of the protease active site of the proenzyme becomes the pyruvoyl prosthetic group, which constitutes an essential element of the active site of the mature decarboxylase.

Its subcellular location is the cell membrane. It carries out the reaction a 1,2-diacyl-sn-glycero-3-phospho-L-serine + H(+) = a 1,2-diacyl-sn-glycero-3-phosphoethanolamine + CO2. It participates in phospholipid metabolism; phosphatidylethanolamine biosynthesis; phosphatidylethanolamine from CDP-diacylglycerol: step 2/2. Functionally, catalyzes the formation of phosphatidylethanolamine (PtdEtn) from phosphatidylserine (PtdSer). This Bacillus cereus (strain AH820) protein is Phosphatidylserine decarboxylase proenzyme.